A 509-amino-acid chain; its full sequence is Steroid 17-alpha-hydroxylase/17,20 lyase (509 aa).

Asparagine 202 is a binding site for substrate. A heme-binding site is contributed by cysteine 442.

Belongs to the cytochrome P450 family. It depends on heme as a cofactor.

The protein localises to the endoplasmic reticulum membrane. It is found in the microsome membrane. The enzyme catalyses a C21-steroid + reduced [NADPH--hemoprotein reductase] + O2 = a 17alpha-hydroxy-C21-steroid + oxidized [NADPH--hemoprotein reductase] + H2O + H(+). It carries out the reaction progesterone + reduced [NADPH--hemoprotein reductase] + O2 = 17alpha-hydroxyprogesterone + oxidized [NADPH--hemoprotein reductase] + H2O + H(+). The catalysed reaction is pregnenolone + reduced [NADPH--hemoprotein reductase] + O2 = 17alpha-hydroxypregnenolone + oxidized [NADPH--hemoprotein reductase] + H2O + H(+). It catalyses the reaction 17alpha-hydroxyprogesterone + reduced [NADPH--hemoprotein reductase] + O2 = androst-4-ene-3,17-dione + acetate + oxidized [NADPH--hemoprotein reductase] + H2O + 2 H(+). The enzyme catalyses 17alpha-hydroxyprogesterone + reduced [NADPH--hemoprotein reductase] + O2 = 16alpha,17alpha-dihydroxyprogesterone + oxidized [NADPH--hemoprotein reductase] + H2O + H(+). It carries out the reaction 16alpha,17alpha-dihydroxyprogesterone + reduced [NADPH--hemoprotein reductase] + O2 = 6beta,16alpha,17alpha-trihydroxyprogesterone + oxidized [NADPH--hemoprotein reductase] + H2O + H(+). The catalysed reaction is 17alpha-hydroxypregnenolone + reduced [NADPH--hemoprotein reductase] + O2 = 3beta-hydroxyandrost-5-en-17-one + acetate + oxidized [NADPH--hemoprotein reductase] + H2O + 2 H(+). It catalyses the reaction 16alpha,17alpha-dihydroxypregnenolone + reduced [NADPH--hemoprotein reductase] + O2 = 3beta,16alpha-dihydroxy-androst-5-en-17-one + acetate + oxidized [NADPH--hemoprotein reductase] + H2O + 2 H(+). The enzyme catalyses 3beta-hydroxyandrost-5-en-17-one + reduced [NADPH--hemoprotein reductase] + O2 = 3beta,16alpha-dihydroxy-androst-5-en-17-one + oxidized [NADPH--hemoprotein reductase] + H2O + H(+). It carries out the reaction androst-4-ene-3,17-dione + reduced [NADPH--hemoprotein reductase] + O2 = 16alpha-hydroxyandrost-4-ene-3,17-dione + oxidized [NADPH--hemoprotein reductase] + H2O + H(+). Its pathway is steroid hormone biosynthesis. It functions in the pathway steroid biosynthesis; glucocorticoid biosynthesis. Regulated predominantly by intracellular cAMP levels. The 17,20-lyase activity is stimulated by cytochrome b5, which acts as an allosteric effector increasing the Vmax of the lyase activity. Its function is as follows. A cytochrome P450 monooxygenase involved in corticoid and androgen biosynthesis. Catalyzes 17-alpha hydroxylation of C21 steroids, which is common for both pathways. A second oxidative step, required only for androgen synthesis, involves an acyl-carbon cleavage. The 17-alpha hydroxy intermediates, as part of adrenal glucocorticoids biosynthesis pathway, are precursors of cortisol. Hydroxylates steroid hormones, pregnenolone and progesterone to form 17-alpha hydroxy metabolites, followed by the cleavage of the C17-C20 bond to form C19 steroids, dehydroepiandrosterone (DHEA) and androstenedione. Has 16-alpha hydroxylase activity. Catalyzes 16-alpha hydroxylation of 17-alpha hydroxy pregnenolone, followed by the cleavage of the C17-C20 bond to form 16-alpha-hydroxy DHEA. Also 16-alpha hydroxylates androgens, relevant for estriol synthesis. Mechanistically, uses molecular oxygen inserting one oxygen atom into a substrate, and reducing the second into a water molecule, with two electrons provided by NADPH via cytochrome P450 reductase (CPR; NADPH-ferrihemoprotein reductase). This Bison bison (American bison) protein is Steroid 17-alpha-hydroxylase/17,20 lyase (CYP17A1).